The following is a 343-amino-acid chain: Cysteine proteinase 1 (343 aa).

An N-terminal signal peptide occupies residues 1–18; that stretch reads MKVILLFVLAVFTVFVSS. Residues 19–117 constitute a propeptide, activation peptide; sequence RGIPLEEQSQ…DYLDDEFINS (99 aa). 3 disulfides stabilise this stretch: Cys139-Cys190, Cys173-Cys224, and Cys279-Cys332. The active site involves Cys142. Active-site residues include His286 and Asn311.

It belongs to the peptidase C1 family. Post-translationally, phosphoglycosylated, contains GlcNAc-alpha-1-P-Ser residues.

The protein resides in the lysosome. Its function is as follows. Cysteine proteinases 1 and 2 are believed to participate in the breakdown of protein during differentiation of Dictyostelium as a response to starvation. The sequence is that of Cysteine proteinase 1 (cprA) from Dictyostelium discoideum (Social amoeba).